The chain runs to 325 residues: Phosphatidylserine decarboxylase proenzyme (325 aa).

Catalysis depends on charge relay system; for autoendoproteolytic cleavage activity residues Asp90, His147, and Ser253. The active-site Schiff-base intermediate with substrate; via pyruvic acid; for decarboxylase activity is Ser253. Ser253 is modified (pyruvic acid (Ser); by autocatalysis). The tract at residues Met281–Ser325 is disordered. Positions Lys284–Asn305 are enriched in polar residues.

The protein belongs to the phosphatidylserine decarboxylase family. PSD-B subfamily. Prokaryotic type I sub-subfamily. Heterodimer of a large membrane-associated beta subunit and a small pyruvoyl-containing alpha subunit. Requires pyruvate as cofactor. In terms of processing, is synthesized initially as an inactive proenzyme. Formation of the active enzyme involves a self-maturation process in which the active site pyruvoyl group is generated from an internal serine residue via an autocatalytic post-translational modification. Two non-identical subunits are generated from the proenzyme in this reaction, and the pyruvate is formed at the N-terminus of the alpha chain, which is derived from the carboxyl end of the proenzyme. The autoendoproteolytic cleavage occurs by a canonical serine protease mechanism, in which the side chain hydroxyl group of the serine supplies its oxygen atom to form the C-terminus of the beta chain, while the remainder of the serine residue undergoes an oxidative deamination to produce ammonia and the pyruvoyl prosthetic group on the alpha chain. During this reaction, the Ser that is part of the protease active site of the proenzyme becomes the pyruvoyl prosthetic group, which constitutes an essential element of the active site of the mature decarboxylase.

It is found in the cell membrane. It carries out the reaction a 1,2-diacyl-sn-glycero-3-phospho-L-serine + H(+) = a 1,2-diacyl-sn-glycero-3-phosphoethanolamine + CO2. The protein operates within phospholipid metabolism; phosphatidylethanolamine biosynthesis; phosphatidylethanolamine from CDP-diacylglycerol: step 2/2. In terms of biological role, catalyzes the formation of phosphatidylethanolamine (PtdEtn) from phosphatidylserine (PtdSer). This chain is Phosphatidylserine decarboxylase proenzyme, found in Alteromonas mediterranea (strain DSM 17117 / CIP 110805 / LMG 28347 / Deep ecotype).